A 237-amino-acid polypeptide reads, in one-letter code: Alpha-S1-casein (237 aa).

An N-terminal signal peptide occupies residues 1–15 (MKLLIFSCLVTLALA). Residues 39-60 (EDPIPVSEASSSEESVHQLNRD) are disordered. Residues Ser79, Ser80, and Ser81 each carry the phosphoserine modification.

Belongs to the alpha-casein family. As to expression, mammary gland specific. Secreted in milk.

The protein localises to the secreted. Its function is as follows. Important role in the capacity of milk to transport calcium phosphate. The sequence is that of Alpha-S1-casein (CSN1S1) from Notamacropus eugenii (Tammar wallaby).